The sequence spans 416 residues: Adenylosuccinate synthetase (416 aa).

GTP-binding positions include 13 to 19 (GDEGKGK) and 41 to 43 (GHT). D14 functions as the Proton acceptor in the catalytic mechanism. Mg(2+)-binding residues include D14 and G41. IMP-binding positions include 14-17 (DEGK), 39-42 (NAGH), T126, R140, Q220, T235, and R299. The Proton donor role is filled by H42. Substrate is bound at residue 295–301 (TTTGRPR). Residues R301, 327–329 (KLD), and 405–407 (STS) contribute to the GTP site.

Belongs to the adenylosuccinate synthetase family. In terms of assembly, homodimer. Requires Mg(2+) as cofactor.

It localises to the cytoplasm. It carries out the reaction IMP + L-aspartate + GTP = N(6)-(1,2-dicarboxyethyl)-AMP + GDP + phosphate + 2 H(+). It functions in the pathway purine metabolism; AMP biosynthesis via de novo pathway; AMP from IMP: step 1/2. Functionally, plays an important role in the de novo pathway of purine nucleotide biosynthesis. Catalyzes the first committed step in the biosynthesis of AMP from IMP. The polypeptide is Adenylosuccinate synthetase (Sulfurovum sp. (strain NBC37-1)).